Reading from the N-terminus, the 70-residue chain is SPbeta prophage-derived uncharacterized protein YorZ (70 aa).

In Bacillus subtilis (strain 168), this protein is SPbeta prophage-derived uncharacterized protein YorZ (yorZ).